The chain runs to 82 residues: Small ribosomal subunit protein uS17 (82 aa).

Belongs to the universal ribosomal protein uS17 family. In terms of assembly, part of the 30S ribosomal subunit.

One of the primary rRNA binding proteins, it binds specifically to the 5'-end of 16S ribosomal RNA. This is Small ribosomal subunit protein uS17 from Aeromonas salmonicida (strain A449).